A 546-amino-acid polypeptide reads, in one-letter code: Chaperonin GroEL (546 aa).

Residues 29 to 32 (TLGP), K50, 86 to 90 (DGTTT), G415, and D495 contribute to the ATP site.

Belongs to the chaperonin (HSP60) family. In terms of assembly, forms a cylinder of 14 subunits composed of two heptameric rings stacked back-to-back. Interacts with the co-chaperonin GroES.

The protein resides in the cytoplasm. The catalysed reaction is ATP + H2O + a folded polypeptide = ADP + phosphate + an unfolded polypeptide.. Its function is as follows. Together with its co-chaperonin GroES, plays an essential role in assisting protein folding. The GroEL-GroES system forms a nano-cage that allows encapsulation of the non-native substrate proteins and provides a physical environment optimized to promote and accelerate protein folding. The protein is Chaperonin GroEL of Parabacteroides distasonis (strain ATCC 8503 / DSM 20701 / CIP 104284 / JCM 5825 / NCTC 11152).